A 576-amino-acid polypeptide reads, in one-letter code: uncharacterized protein (576 aa).

2 stretches are compositionally biased toward polar residues: residues 1 to 21 (MSTNPNAGIQPLTNSISQSAS) and 28 to 40 (HTTSHESVSTYQL). Residues 1–40 (MSTNPNAGIQPLTNSISQSASAHPELYHTTSHESVSTYQL) form a disordered region. Transmembrane regions (helical) follow at residues 149–169 (FASSVFSVPAEAITTIFHISL), 173–193 (LLTMTVFLCGYIAGPIVWAPL), 200–220 (KLPLLIGMFGFGIFNISVAVA), 231–251 (FFSGFFASAPLTVVAAAFADM), 261–281 (ITIFAALVFDGPLVSPIIGGF), 291–311 (WTEYITSFMGFFALVIVYLFC), 366–386 (PIVFLITLYSSFVYAILYLLL), 401–421 (MGVAELPYIGLLVGVFIGSAI), 446–466 (LPPMMIGCFMFPAGIFWLSWS), 472–492 (VHWIVPTLSGLATGCGILLIF), 503–525 (YLFRAASAVAANTIMRSAMAAGF), and 542–562 (GSLLGFIAVALIPMPFAFFFF).

Belongs to the major facilitator superfamily. CAR1 family.

Its subcellular location is the endoplasmic reticulum. The protein resides in the golgi apparatus. It is found in the membrane. This is an uncharacterized protein from Schizosaccharomyces pombe (strain 972 / ATCC 24843) (Fission yeast).